Reading from the N-terminus, the 190-residue chain is Recombination protein RecR (190 aa).

The C4-type zinc-finger motif lies at 58–73 (CEQCGALSENELCEIC). A Toprim domain is found at 81-167 (NILCIVESPK…TFSKIAQGIP (87 aa)).

Belongs to the RecR family.

Its function is as follows. May play a role in DNA repair. It seems to be involved in an RecBC-independent recombinational process of DNA repair. It may act with RecF and RecO. This is Recombination protein RecR from Campylobacter jejuni subsp. doylei (strain ATCC BAA-1458 / RM4099 / 269.97).